The sequence spans 368 residues: Hydrophobic dipeptide epimerase (368 aa).

Substrate-binding positions include threonine 143 and 168–170; that span reads KIK. Aspartate 197, glutamate 225, and aspartate 253 together coordinate Mg(2+). Substrate contacts are provided by residues lysine 277 and 329–331; that span reads DMD.

Belongs to the mandelate racemase/muconate lactonizing enzyme family. Mg(2+) is required as a cofactor.

Functionally, catalyzes the epimerization of various hydrophobic dipeptides, such as L-Ala-L-Phe. Has epimerase activity with L-Ala-L-Thr, L-Ala-L-Met, L-Ala-L-Tyr, as well as L-Phe-L-Met, L-Phe-L-Ser and L-Phe-L-Thr (in vitro). The sequence is that of Hydrophobic dipeptide epimerase from Citrifermentans bemidjiense (strain ATCC BAA-1014 / DSM 16622 / JCM 12645 / Bem) (Geobacter bemidjiensis).